A 121-amino-acid polypeptide reads, in one-letter code: Ribosome-binding factor A (121 aa).

It belongs to the RbfA family. As to quaternary structure, monomer. Binds 30S ribosomal subunits, but not 50S ribosomal subunits or 70S ribosomes.

Its subcellular location is the cytoplasm. Functionally, one of several proteins that assist in the late maturation steps of the functional core of the 30S ribosomal subunit. Associates with free 30S ribosomal subunits (but not with 30S subunits that are part of 70S ribosomes or polysomes). Required for efficient processing of 16S rRNA. May interact with the 5'-terminal helix region of 16S rRNA. This is Ribosome-binding factor A from Hydrogenovibrio crunogenus (strain DSM 25203 / XCL-2) (Thiomicrospira crunogena).